The primary structure comprises 425 residues: Serine hydroxymethyltransferase (425 aa).

(6S)-5,6,7,8-tetrahydrofolate is bound by residues Leu-120 and 124–126 (GHL). An N6-(pyridoxal phosphate)lysine modification is found at Lys-229. 353–355 (SPF) provides a ligand contact to (6S)-5,6,7,8-tetrahydrofolate.

The protein belongs to the SHMT family. In terms of assembly, homodimer. It depends on pyridoxal 5'-phosphate as a cofactor.

The protein localises to the cytoplasm. The catalysed reaction is (6R)-5,10-methylene-5,6,7,8-tetrahydrofolate + glycine + H2O = (6S)-5,6,7,8-tetrahydrofolate + L-serine. It participates in one-carbon metabolism; tetrahydrofolate interconversion. It functions in the pathway amino-acid biosynthesis; glycine biosynthesis; glycine from L-serine: step 1/1. Functionally, catalyzes the reversible interconversion of serine and glycine with tetrahydrofolate (THF) serving as the one-carbon carrier. This reaction serves as the major source of one-carbon groups required for the biosynthesis of purines, thymidylate, methionine, and other important biomolecules. Also exhibits THF-independent aldolase activity toward beta-hydroxyamino acids, producing glycine and aldehydes, via a retro-aldol mechanism. The polypeptide is Serine hydroxymethyltransferase (Thermosynechococcus vestitus (strain NIES-2133 / IAM M-273 / BP-1)).